Reading from the N-terminus, the 365-residue chain is MFETNPILSKLKEIRERANLLRGYLDYDVKAERLVEVSRELELPDVWNEPERAQALGKERSSLEEVVNTIVELETGCEDIEGLVELAVEESDQETFDDAEVEADALDKVLEKLEFRRMFSGEQDANNSYLDIQSGSGGTEAQDWAEMLMRMYLRWGEAHGYKTEVIEVTDGDVAGIKGCTIKYTGEYAYGWLRTETGVHRLVRKSPFDSSGRRHTSFASAFIYPEIDDNIEIDINPADLRIDTFRASGAGGQHVNKTDSAIRITHEPTGAVVACQADRSQHKNRATAMKLLKAKLYEMEMQKQNSDKQVLEDGKSDIGWGSQIRSYVLDDSRIKDLRTGVENRNTQAVLDGDLDKFLEASLKSGL.

At glutamine 252 the chain carries N5-methylglutamine.

The protein belongs to the prokaryotic/mitochondrial release factor family. Methylated by PrmC. Methylation increases the termination efficiency of RF2.

The protein localises to the cytoplasm. In terms of biological role, peptide chain release factor 2 directs the termination of translation in response to the peptide chain termination codons UGA and UAA. The sequence is that of Peptide chain release factor 2 from Colwellia psychrerythraea (strain 34H / ATCC BAA-681) (Vibrio psychroerythus).